We begin with the raw amino-acid sequence, 314 residues long: Transcription factor TCP20 (314 aa).

Disordered stretches follow at residues 1–91 and 295–314; these read MDPK…RGRR and NHEEHQQESGEKDDSQGSGR. 2 stretches are compositionally biased toward basic and acidic residues: residues 38–49 and 77–89; these read DENRKPTTEIKD and SNKDRHTKVEGRG. The region spanning 78–132 is the TCP domain; that stretch reads NKDRHTKVEGRGRRIRMPALCAARIFQLTRELGHKSDGETIQWLLQQAEPSIIAA.

As to quaternary structure, interacts with PURA1. Interacts with SPL.

The protein localises to the nucleus. In terms of biological role, transcription factor that binds to the site II motif (3'-TGGGCC/T-5') in the promoter of PCNA-2 and to 3'-GCCCG/A-5' elements in the promoters of cyclin CYCB1-1 and ribosomal protein genes. In Arabidopsis thaliana (Mouse-ear cress), this protein is Transcription factor TCP20 (TCP20).